An 813-amino-acid chain; its full sequence is LPS-assembly protein LptD (813 aa).

A signal peptide spans 1–22 (MRRALRLLPLPLSIAICLPAMA).

It belongs to the LptD family. Component of the lipopolysaccharide transport and assembly complex. Interacts with LptE and LptA.

It is found in the cell outer membrane. Its function is as follows. Together with LptE, is involved in the assembly of lipopolysaccharide (LPS) at the surface of the outer membrane. This is LPS-assembly protein LptD from Xanthomonas oryzae pv. oryzae (strain MAFF 311018).